The sequence spans 177 residues: Inorganic pyrophosphatase (177 aa).

Residues K31, R45, and Y57 each coordinate substrate. Positions 67, 72, and 104 each coordinate Mg(2+). Y142 contributes to the substrate binding site.

The protein belongs to the PPase family. Homohexamer. It depends on Mg(2+) as a cofactor.

The protein localises to the cytoplasm. The enzyme catalyses diphosphate + H2O = 2 phosphate + H(+). Catalyzes the hydrolysis of inorganic pyrophosphate (PPi) forming two phosphate ions. This chain is Inorganic pyrophosphatase, found in Neisseria meningitidis serogroup B (strain ATCC BAA-335 / MC58).